A 1103-amino-acid chain; its full sequence is Coatomer subunit beta (1103 aa).

HEAT repeat units lie at residues 51–89, 94–129, 130–166, 247–284, 322–359, 365–404, and 405–441; these read EAYT…CRPD, EEMI…RQFK, VLEP…NFGL, QQKA…APVS, RTME…KNSV, VLKR…RFPE, and AAAS…TCVH.

As to quaternary structure, oligomeric complex that consists of at least the alpha, beta, beta', gamma, delta, epsilon and zeta subunits.

It localises to the cytoplasm. It is found in the golgi apparatus membrane. The protein resides in the cytoplasmic vesicle. The protein localises to the COPI-coated vesicle membrane. In terms of biological role, the coatomer is a cytosolic protein complex that binds to dilysine motifs and reversibly associates with Golgi non-clathrin-coated vesicles, which further mediate biosynthetic protein transport from the ER, via the Golgi up to the trans Golgi network. Coatomer complex is required for budding from Golgi membranes, and is essential for the retrograde Golgi-to-ER transport of dilysine-tagged proteins. This Toxoplasma gondii protein is Coatomer subunit beta.